The following is an 807-amino-acid chain: Probable dimethyl sulfoxide reductase chain YnfF (807 aa).

Residues 1-45 (MKIHTTEALMKAEISRRSLMKTSALGSLALASSAFTLPFSQMVRA) constitute a signal peptide (tat-type signal). The 4Fe-4S Mo/W bis-MGD-type domain maps to 52–113 (EKAVWSSCTV…SIRRRMNHPD (62 aa)). [4Fe-4S] cluster contacts are provided by Cys-59, Cys-63, Cys-67, and Cys-99. Ser-195 is a Mo-bis(molybdopterin guanine dinucleotide) binding site.

The protein belongs to the prokaryotic molybdopterin-containing oxidoreductase family. In terms of assembly, the complex consists of three subunits: YnfF, the reductase; YnfG, an electron transfer protein, and YnfH, a membrane anchor protein. [4Fe-4S] cluster serves as cofactor. Mo-bis(molybdopterin guanine dinucleotide) is required as a cofactor. Exported by the Tat system. The position of the signal peptide cleavage has not been experimentally proven. Can also be exported by the Sec system.

It is found in the cell membrane. Terminal reductase during anaerobic growth on various sulfoxide and N-oxide compounds. The polypeptide is Probable dimethyl sulfoxide reductase chain YnfF (ynfF) (Escherichia coli (strain K12)).